The primary structure comprises 109 residues: Small ribosomal subunit protein uS17 (109 aa).

The protein belongs to the universal ribosomal protein uS17 family. As to quaternary structure, part of the 30S ribosomal subunit.

In terms of biological role, one of the primary rRNA binding proteins, it binds specifically to the 5'-end of 16S ribosomal RNA. This is Small ribosomal subunit protein uS17 from Thermoplasma acidophilum (strain ATCC 25905 / DSM 1728 / JCM 9062 / NBRC 15155 / AMRC-C165).